Consider the following 302-residue polypeptide: Segregation and condensation protein A (302 aa).

It belongs to the ScpA family. As to quaternary structure, component of a cohesin-like complex composed of ScpA, ScpB and the Smc homodimer, in which ScpA and ScpB bind to the head domain of Smc. The presence of the three proteins is required for the association of the complex with DNA.

It is found in the cytoplasm. In terms of biological role, participates in chromosomal partition during cell division. May act via the formation of a condensin-like complex containing Smc and ScpB that pull DNA away from mid-cell into both cell halves. This is Segregation and condensation protein A from Xylella fastidiosa (strain Temecula1 / ATCC 700964).